The primary structure comprises 253 residues: Tryptophan synthase alpha chain (253 aa).

Catalysis depends on proton acceptor residues E46 and D57.

This sequence belongs to the TrpA family. As to quaternary structure, tetramer of two alpha and two beta chains.

It carries out the reaction (1S,2R)-1-C-(indol-3-yl)glycerol 3-phosphate + L-serine = D-glyceraldehyde 3-phosphate + L-tryptophan + H2O. It participates in amino-acid biosynthesis; L-tryptophan biosynthesis; L-tryptophan from chorismate: step 5/5. Its function is as follows. The alpha subunit is responsible for the aldol cleavage of indoleglycerol phosphate to indole and glyceraldehyde 3-phosphate. In Dictyoglomus turgidum (strain DSM 6724 / Z-1310), this protein is Tryptophan synthase alpha chain.